Here is a 448-residue protein sequence, read N- to C-terminus: N-succinylarginine dihydrolase (448 aa).

Substrate contacts are provided by residues Ala19–Ser28, Asn110, and His137–Arg138. Glu174 is an active-site residue. Residue Arg216 participates in substrate binding. His252 is an active-site residue. 2 residues coordinate substrate: Asp254 and Asn366. The active-site Nucleophile is Cys372.

Belongs to the succinylarginine dihydrolase family. As to quaternary structure, homodimer.

The catalysed reaction is N(2)-succinyl-L-arginine + 2 H2O + 2 H(+) = N(2)-succinyl-L-ornithine + 2 NH4(+) + CO2. Its pathway is amino-acid degradation; L-arginine degradation via AST pathway; L-glutamate and succinate from L-arginine: step 2/5. Catalyzes the hydrolysis of N(2)-succinylarginine into N(2)-succinylornithine, ammonia and CO(2). The polypeptide is N-succinylarginine dihydrolase (Legionella pneumophila (strain Lens)).